We begin with the raw amino-acid sequence, 286 residues long: MTIDISEASSSRFARIREGELDLQLHYNDLGEGAETVVMLHGSGPGASGWANFSRNLEPLLAAGYRVVLMDCPGWSKSDPIVCRSSRSDLNATALKGLLDMLGLERVHILGNSMGAHSAVAFALANPRRVGKLVLMGGGTGGASPFVPMPTEGIKLLNGLYREPTIDNLKKMMNVFVYDASDLTEELFQTRLDNMLSRHEHLDNFVESLAANPRQFPDFGSRLAEIQAPTLIVWGRNDRFVPMDAGLRLLAGIPNSSLHVFNNCGHWAQWEHAEPFNRLVLDFLQH.

His-266 functions as the Proton acceptor in the catalytic mechanism.

This sequence belongs to the AB hydrolase superfamily. MhpC family. In terms of assembly, homodimer.

It carries out the reaction (2Z,4E)-2-hydroxy-6-oxonona-2,4-dienedioate + H2O = (2Z)-2-hydroxypenta-2,4-dienoate + succinate + H(+). It catalyses the reaction (2Z,4E,7E)-2-hydroxy-6-oxonona-2,4,7-trienedioate + H2O = (2Z)-2-hydroxypenta-2,4-dienoate + fumarate + H(+). It functions in the pathway aromatic compound metabolism; 3-phenylpropanoate degradation. In terms of biological role, catalyzes the cleavage of the C5-C6 bond of 2-hydroxy-6-oxononadienedioate and 2-hydroxy-6-oxononatrienedioate, a dienol ring fission product of the bacterial meta-cleavage pathway for degradation of phenylpropionic acid. In Pseudomonas putida (Arthrobacter siderocapsulatus), this protein is 2-hydroxy-6-oxononadienedioate/2-hydroxy-6-oxononatrienedioate hydrolase 2.